The sequence spans 188 residues: Putative 3-methyladenine DNA glycosylase (188 aa).

The protein belongs to the DNA glycosylase MPG family.

The polypeptide is Putative 3-methyladenine DNA glycosylase (Ehrlichia ruminantium (strain Gardel)).